The sequence spans 374 residues: tRNA-specific 2-thiouridylase MnmA (374 aa).

ATP-binding positions include 13 to 20 (GMSGGVDS) and Met-39. An interaction with target base in tRNA region spans residues 99 to 101 (NPD). Cys-104 (nucleophile) is an active-site residue. A disulfide bond links Cys-104 and Cys-201. ATP is bound at residue Gly-128. An interaction with tRNA region spans residues 151–153 (KDQ). Cys-201 serves as the catalytic Cysteine persulfide intermediate. The interval 313–314 (RY) is interaction with tRNA.

This sequence belongs to the MnmA/TRMU family.

Its subcellular location is the cytoplasm. The enzyme catalyses S-sulfanyl-L-cysteinyl-[protein] + uridine(34) in tRNA + AH2 + ATP = 2-thiouridine(34) in tRNA + L-cysteinyl-[protein] + A + AMP + diphosphate + H(+). Functionally, catalyzes the 2-thiolation of uridine at the wobble position (U34) of tRNA, leading to the formation of s(2)U34. This chain is tRNA-specific 2-thiouridylase MnmA, found in Streptococcus equi subsp. zooepidemicus (strain MGCS10565).